The following is a 215-amino-acid chain: tRNA (guanine-N(7)-)-methyltransferase (215 aa).

S-adenosyl-L-methionine contacts are provided by aspartate 43, glutamate 68, asparagine 95, and aspartate 121. The active site involves aspartate 121. Substrate is bound by residues lysine 125 and aspartate 157.

Belongs to the class I-like SAM-binding methyltransferase superfamily. TrmB family.

The enzyme catalyses guanosine(46) in tRNA + S-adenosyl-L-methionine = N(7)-methylguanosine(46) in tRNA + S-adenosyl-L-homocysteine. It functions in the pathway tRNA modification; N(7)-methylguanine-tRNA biosynthesis. In terms of biological role, catalyzes the formation of N(7)-methylguanine at position 46 (m7G46) in tRNA. This chain is tRNA (guanine-N(7)-)-methyltransferase, found in Trichormus variabilis (strain ATCC 29413 / PCC 7937) (Anabaena variabilis).